A 447-amino-acid chain; its full sequence is ATP-dependent protease ATPase subunit HslU (447 aa).

ATP contacts are provided by residues I17 and 59–64 (GVGKTE). Positions 136–160 (PPARGGFQGEPTAEEKPTEKKESAT) are disordered. Residues 148–159 (AEEKPTEKKESA) are compositionally biased toward basic and acidic residues. D260, E325, and R397 together coordinate ATP.

Belongs to the ClpX chaperone family. HslU subfamily. As to quaternary structure, a double ring-shaped homohexamer of HslV is capped on each side by a ring-shaped HslU homohexamer. The assembly of the HslU/HslV complex is dependent on binding of ATP.

The protein localises to the cytoplasm. Its function is as follows. ATPase subunit of a proteasome-like degradation complex; this subunit has chaperone activity. The binding of ATP and its subsequent hydrolysis by HslU are essential for unfolding of protein substrates subsequently hydrolyzed by HslV. HslU recognizes the N-terminal part of its protein substrates and unfolds these before they are guided to HslV for hydrolysis. The sequence is that of ATP-dependent protease ATPase subunit HslU from Coxiella burnetii (strain Dugway 5J108-111).